The sequence spans 343 residues: uncharacterized protein (343 aa).

This sequence belongs to the histone deacetylase family.

Its function is as follows. Putative deacetylase. This is an uncharacterized protein from Methanocaldococcus jannaschii (strain ATCC 43067 / DSM 2661 / JAL-1 / JCM 10045 / NBRC 100440) (Methanococcus jannaschii).